The chain runs to 356 residues: tRNA N6-adenosine threonylcarbamoyltransferase (356 aa).

Residues H115 and H119 each contribute to the Fe cation site. Residues 138-142, D171, G184, and N283 each bind substrate; that span reads LVSGG. D311 provides a ligand contact to Fe cation.

Belongs to the KAE1 / TsaD family. It depends on Fe(2+) as a cofactor.

It localises to the cytoplasm. The catalysed reaction is L-threonylcarbamoyladenylate + adenosine(37) in tRNA = N(6)-L-threonylcarbamoyladenosine(37) in tRNA + AMP + H(+). Its function is as follows. Required for the formation of a threonylcarbamoyl group on adenosine at position 37 (t(6)A37) in tRNAs that read codons beginning with adenine. Is involved in the transfer of the threonylcarbamoyl moiety of threonylcarbamoyl-AMP (TC-AMP) to the N6 group of A37, together with TsaE and TsaB. TsaD likely plays a direct catalytic role in this reaction. This Prochlorococcus marinus (strain NATL2A) protein is tRNA N6-adenosine threonylcarbamoyltransferase.